A 347-amino-acid chain; its full sequence is MLISQRPTLSEDILTDNRSQFVIEPLEPGFGYTLGNSLRRTLLSSIPGAAVTSIRIDGVLHEFTTVPGVKEDVTEIILNLKGLVVSSEEDEPVTMYLRKQGPGEVTAGDIVPPAGVTLHNPGMRIATLNDKGKIEAELVVERGRGYVPAVQNRALGAEIGRIPVDSIYSPVLKVTYKVDATRVEQRTDFDKLILDVETKSSITPRDALASAGKTLVELFGLARELNVEAEGIEIGPSPAEADHIASFALPIDDLDLTVRSYNCLKREGVHTVGELVSRTESDLLDIRNFGQKSIDEVKVKLHQLGLSLKDSPDSFDPSEVAGYDVTTGTWSTDGAYDSQDYAETEQL.

The alpha N-terminal domain (alpha-NTD) stretch occupies residues 1 to 226 (MLISQRPTLS…ELFGLARELN (226 aa)). An alpha C-terminal domain (alpha-CTD) region spans residues 243-347 (HIASFALPID…SQDYAETEQL (105 aa)). Residues 326–347 (TTGTWSTDGAYDSQDYAETEQL) are disordered.

It belongs to the RNA polymerase alpha chain family. As to quaternary structure, homodimer. The RNAP catalytic core consists of 2 alpha, 1 beta, 1 beta' and 1 omega subunit. When a sigma factor is associated with the core the holoenzyme is formed, which can initiate transcription.

It catalyses the reaction RNA(n) + a ribonucleoside 5'-triphosphate = RNA(n+1) + diphosphate. Functionally, DNA-dependent RNA polymerase catalyzes the transcription of DNA into RNA using the four ribonucleoside triphosphates as substrates. This Mycobacterium leprae (strain TN) protein is DNA-directed RNA polymerase subunit alpha.